We begin with the raw amino-acid sequence, 278 residues long: Undecaprenyl-diphosphatase 1 (278 aa).

A run of 6 helical transmembrane segments spans residues 45–65 (AVIG…LVYF), 95–115 (WWVI…KPLI), 119–139 (LASL…MWWA), 191–211 (VAAT…AGLY), 225–245 (PLAV…AWLL), and 256–276 (FVVY…TGVL).

It belongs to the UppP family.

It localises to the cell membrane. It catalyses the reaction di-trans,octa-cis-undecaprenyl diphosphate + H2O = di-trans,octa-cis-undecaprenyl phosphate + phosphate + H(+). Functionally, catalyzes the dephosphorylation of undecaprenyl diphosphate (UPP). Confers resistance to bacitracin. The protein is Undecaprenyl-diphosphatase 1 of Streptomyces coelicolor (strain ATCC BAA-471 / A3(2) / M145).